The sequence spans 303 residues: Protoheme IX farnesyltransferase (303 aa).

6 helical membrane-spanning segments follow: residues Met25 to Met45, Ile54 to Leu74, Cys118 to Val138, Ile166 to Val186, Leu230 to Ile250, and Phe280 to Ile300.

The protein belongs to the UbiA prenyltransferase family. Protoheme IX farnesyltransferase subfamily. As to quaternary structure, interacts with CtaA.

It localises to the cell membrane. The enzyme catalyses heme b + (2E,6E)-farnesyl diphosphate + H2O = Fe(II)-heme o + diphosphate. The protein operates within porphyrin-containing compound metabolism; heme O biosynthesis; heme O from protoheme: step 1/1. Its function is as follows. Converts heme B (protoheme IX) to heme O by substitution of the vinyl group on carbon 2 of heme B porphyrin ring with a hydroxyethyl farnesyl side group. This chain is Protoheme IX farnesyltransferase, found in Staphylococcus epidermidis (strain ATCC 12228 / FDA PCI 1200).